Reading from the N-terminus, the 539-residue chain is Chaperonin GroEL 2 (539 aa).

Residues 29-32 (TLGP), 86-90 (DGTTT), Gly413, 477-479 (NAA), and Asp493 contribute to the ATP site. The segment at 519–539 (VVDKPEEEDSAAAGHGHGHSH) is disordered.

Belongs to the chaperonin (HSP60) family. As to quaternary structure, forms a cylinder of 14 subunits composed of two heptameric rings stacked back-to-back. Interacts with the co-chaperonin GroES.

It is found in the cytoplasm. It carries out the reaction ATP + H2O + a folded polypeptide = ADP + phosphate + an unfolded polypeptide.. Together with its co-chaperonin GroES, plays an essential role in assisting protein folding. The GroEL-GroES system forms a nano-cage that allows encapsulation of the non-native substrate proteins and provides a physical environment optimized to promote and accelerate protein folding. This chain is Chaperonin GroEL 2, found in Saccharopolyspora erythraea (strain ATCC 11635 / DSM 40517 / JCM 4748 / NBRC 13426 / NCIMB 8594 / NRRL 2338).